Consider the following 1322-residue polypeptide: Putative DNA ligase 4 (1322 aa).

11 residues coordinate ATP: Glu-265, Lys-267, Arg-272, Arg-287, Glu-317, Phe-387, Glu-497, Lys-502, Arg-513, Lys-519, and Lys-521. The active-site N6-AMP-lysine intermediate is Lys-267. Glu-317 contacts Mg(2+). Glu-497 contacts Mg(2+). BRCT domains are found at residues 686–768 and 825–935; these read LDVQ…PKFD and ERFC…TYSL. Disordered stretches follow at residues 945–1212 and 1245–1310; these read IERS…SATC and AEAK…KKVS. The segment covering 957 to 969 has biased composition (basic and acidic residues); it reads DKLEENEKADTSH. Basic residues-rich tracts occupy residues 970-979 and 994-1005; these read VKHAPRKRGR and PVRRTRARRGNQ. Composition is skewed to basic and acidic residues over residues 1007-1022 and 1033-1047; these read AKIDDVEPEESDHGET and NISKMEVDSFDKDQV. A compositionally biased stretch (basic residues) spans 1051–1063; that stretch reads PVRRTRARRGKQH. 3 stretches are compositionally biased toward basic and acidic residues: residues 1082-1104, 1125-1161, and 1190-1204; these read DDQRLDADYISKMEEDSSDRDQG, AKIDRETGPGETGQDDKKLNADSISKMEEHAHDKDQE, and PKHERNQTVLRRDTA. Low complexity predominate over residues 1261-1288; the sequence is SSYVAPVPQASASSASSSGVPAPHAGSS.

The protein belongs to the ATP-dependent DNA ligase family. Mg(2+) is required as a cofactor.

The protein resides in the nucleus. It carries out the reaction ATP + (deoxyribonucleotide)n-3'-hydroxyl + 5'-phospho-(deoxyribonucleotide)m = (deoxyribonucleotide)n+m + AMP + diphosphate.. DNA ligase involved in DNA non-homologous end joining (NHEJ); required for double-strand break (DSB) repair. In Oryza sativa subsp. japonica (Rice), this protein is Putative DNA ligase 4 (LIG4).